A 349-amino-acid chain; its full sequence is Phenylalanine--tRNA ligase alpha subunit (349 aa).

E264 contributes to the Mg(2+) binding site.

This sequence belongs to the class-II aminoacyl-tRNA synthetase family. Phe-tRNA synthetase alpha subunit type 1 subfamily. As to quaternary structure, tetramer of two alpha and two beta subunits. The cofactor is Mg(2+).

It localises to the cytoplasm. The catalysed reaction is tRNA(Phe) + L-phenylalanine + ATP = L-phenylalanyl-tRNA(Phe) + AMP + diphosphate + H(+). The protein is Phenylalanine--tRNA ligase alpha subunit of Myxococcus xanthus (strain DK1622).